The following is a 362-amino-acid chain: Heat-inducible transcription repressor HrcA (362 aa).

Belongs to the HrcA family.

In terms of biological role, negative regulator of class I heat shock genes (grpE-dnaK-dnaJ and groELS operons). Prevents heat-shock induction of these operons. This Rhodopseudomonas palustris (strain BisB18) protein is Heat-inducible transcription repressor HrcA.